A 343-amino-acid polypeptide reads, in one-letter code: Probable siderophore transport system permease protein YfhA (343 aa).

Transmembrane regions (helical) follow at residues 15–35 (WIVFLVLLGLTAAVLIISAGL), 69–89 (ILTALCAGVCLAAAGAILQGL), 97–117 (PDIIGITGGAAVAVVLLMMFF), 130–150 (WLPAAAFIGASAVGLIVYLLA), 160–180 (LVLIGIGFSMSAQAMTTLLMI), 204–224 (QHVKIAIILSVILLFICFVAL), 249–269 (FFLLLLSTALTGCAVSVAGTI), 289–309 (GALLPASALIGALLVLTADIV), and 317–337 (VEVPAGVFTAAIGAPYFIYLL).

Belongs to the binding-protein-dependent transport system permease family. FecCD subfamily. In terms of assembly, the complex is composed of one ATP-binding protein (YusV), two transmembrane proteins (YfiZ and YfhA) and a solute-binding protein (YfiY).

It localises to the cell membrane. Its function is as follows. Part of the ABC transporter complex YfiYZ/YfhA/YusV involved in import of the iron-hydroxamate siderophores schizokinen, arthrobactin and corprogen. In Bacillus subtilis (strain 168), this protein is Probable siderophore transport system permease protein YfhA (yfhA).